We begin with the raw amino-acid sequence, 61 residues long: Protein translocase subunit SecE (61 aa).

Residues 39–59 (LGIILIGLIGMLIRIMGILVL) form a helical membrane-spanning segment.

The protein belongs to the SecE/SEC61-gamma family. As to quaternary structure, component of the Sec protein translocase complex. Heterotrimer consisting of SecY (alpha), SecG (beta) and SecE (gamma) subunits. The heterotrimers can form oligomers, although 1 heterotrimer is thought to be able to translocate proteins. Interacts with the ribosome. May interact with SecDF, and other proteins may be involved.

It is found in the cell membrane. In terms of biological role, essential subunit of the Sec protein translocation channel SecYEG. Clamps together the 2 halves of SecY. May contact the channel plug during translocation. The protein is Protein translocase subunit SecE of Pyrococcus abyssi (strain GE5 / Orsay).